The sequence spans 190 residues: Crossover junction endodeoxyribonuclease RuvC (190 aa).

Catalysis depends on residues D8, E67, and D139. The Mg(2+) site is built by D8, E67, and D139.

The protein belongs to the RuvC family. In terms of assembly, homodimer which binds Holliday junction (HJ) DNA. The HJ becomes 2-fold symmetrical on binding to RuvC with unstacked arms; it has a different conformation from HJ DNA in complex with RuvA. In the full resolvosome a probable DNA-RuvA(4)-RuvB(12)-RuvC(2) complex forms which resolves the HJ. Mg(2+) serves as cofactor.

The protein resides in the cytoplasm. It carries out the reaction Endonucleolytic cleavage at a junction such as a reciprocal single-stranded crossover between two homologous DNA duplexes (Holliday junction).. Its function is as follows. The RuvA-RuvB-RuvC complex processes Holliday junction (HJ) DNA during genetic recombination and DNA repair. Endonuclease that resolves HJ intermediates. Cleaves cruciform DNA by making single-stranded nicks across the HJ at symmetrical positions within the homologous arms, yielding a 5'-phosphate and a 3'-hydroxyl group; requires a central core of homology in the junction. The consensus cleavage sequence is 5'-(A/T)TT(C/G)-3'. Cleavage occurs on the 3'-side of the TT dinucleotide at the point of strand exchange. HJ branch migration catalyzed by RuvA-RuvB allows RuvC to scan DNA until it finds its consensus sequence, where it cleaves and resolves the cruciform DNA. The sequence is that of Crossover junction endodeoxyribonuclease RuvC from Actinobacillus succinogenes (strain ATCC 55618 / DSM 22257 / CCUG 43843 / 130Z).